We begin with the raw amino-acid sequence, 96 residues long: Small ribosomal subunit protein bS6 (96 aa).

This sequence belongs to the bacterial ribosomal protein bS6 family.

Binds together with bS18 to 16S ribosomal RNA. The chain is Small ribosomal subunit protein bS6 from Acidothermus cellulolyticus (strain ATCC 43068 / DSM 8971 / 11B).